The primary structure comprises 418 residues: MIPTADPILSFNPEALPPSALHMLSLSPKAMEKMSGISNPLVSPNAIPPRTSSTGIPTSLNATPTKPVLRPVPEGDWLSQKQLSPRAQMSNAGYGVMQAPNPPPDPERYAHEDLEFTAKRSWTDEKENVVRGPYDYVISHPGKDFRAQLIGAFNVWLDVPTSSLEVITRVVGMLHESSLLIDDVQDSSELRRGFPVAHNIFGVAQTINSGNYIYFVALQELHKLNNPELITIFSDELVNLHRGQGMDLFWCDTLTCPTEEDYLEMVGNKTGGLFRLGIKLMAAEANGPSPTDCVPLVNLIGLIFQIRDDYMNLSSKEYSHNKGMCEDLTEGKFSFPVIHSIRTNPTNLQLINILKQKTSDTQIKRYAVAYMESTGSFEYTRKVLSVLIERARKMAEELDQGRGSTKGIQKILDKMAIQ.

Positions 51 to 64 (TSSTGIPTSLNATP) are enriched in polar residues. Residues 51 to 73 (TSSTGIPTSLNATPTKPVLRPVP) are disordered. Residues K143, R146, and H175 each contribute to the isopentenyl diphosphate site. D182 and D186 together coordinate Mg(2+). Dimethylallyl diphosphate is bound at residue R191. R192 is an isopentenyl diphosphate binding site. 5 residues coordinate dimethylallyl diphosphate: K269, T270, Q305, K322, and K332.

This sequence belongs to the FPP/GGPP synthase family. It depends on Mg(2+) as a cofactor.

It is found in the cytoplasm. It carries out the reaction isopentenyl diphosphate + dimethylallyl diphosphate = (2E)-geranyl diphosphate + diphosphate. The enzyme catalyses isopentenyl diphosphate + (2E)-geranyl diphosphate = (2E,6E)-farnesyl diphosphate + diphosphate. The catalysed reaction is isopentenyl diphosphate + (2E,6E)-farnesyl diphosphate = (2E,6E,10E)-geranylgeranyl diphosphate + diphosphate. It participates in isoprenoid biosynthesis; farnesyl diphosphate biosynthesis; farnesyl diphosphate from geranyl diphosphate and isopentenyl diphosphate: step 1/1. Its pathway is isoprenoid biosynthesis; geranyl diphosphate biosynthesis; geranyl diphosphate from dimethylallyl diphosphate and isopentenyl diphosphate: step 1/1. It functions in the pathway isoprenoid biosynthesis; geranylgeranyl diphosphate biosynthesis; geranylgeranyl diphosphate from farnesyl diphosphate and isopentenyl diphosphate: step 1/1. Functionally, catalyzes the trans-addition of the three molecules of IPP onto DMAPP to form geranylgeranyl pyrophosphate. In Fusarium fujikuroi (Bakanae and foot rot disease fungus), this protein is Geranylgeranyl pyrophosphate synthase (GGS).